Here is a 134-residue protein sequence, read N- to C-terminus: Small ribosomal subunit protein uS11 (134 aa).

The protein belongs to the universal ribosomal protein uS11 family. Part of the 30S ribosomal subunit. Interacts with proteins S7 and S18. Binds to IF-3.

Its function is as follows. Located on the platform of the 30S subunit, it bridges several disparate RNA helices of the 16S rRNA. Forms part of the Shine-Dalgarno cleft in the 70S ribosome. In Variovorax paradoxus (strain S110), this protein is Small ribosomal subunit protein uS11.